A 689-amino-acid chain; its full sequence is Glycine--tRNA ligase beta subunit (689 aa).

Belongs to the class-II aminoacyl-tRNA synthetase family. As to quaternary structure, tetramer of two alpha and two beta subunits.

It localises to the cytoplasm. It catalyses the reaction tRNA(Gly) + glycine + ATP = glycyl-tRNA(Gly) + AMP + diphosphate. This is Glycine--tRNA ligase beta subunit from Shigella boydii serotype 18 (strain CDC 3083-94 / BS512).